The chain runs to 208 residues: Small ribosomal subunit protein uS5 (208 aa).

Residues 48–111 form the S5 DRBM domain; that stretch reads LEDEVLDINM…DAAKLDITYI (64 aa).

It belongs to the universal ribosomal protein uS5 family. Part of the 30S ribosomal subunit. Contacts protein S4.

With S4 and S12 plays an important role in translational accuracy. This Methanosarcina barkeri (strain Fusaro / DSM 804) protein is Small ribosomal subunit protein uS5.